The chain runs to 320 residues: Zinc finger Ran-binding domain-containing protein 2 (320 aa).

Serine 9 is subject to Phosphoserine. Residues 9–40 (SDGDWICPDKKCGNVNFARRTSCNRCGREKTT) form a RanBP2-type 1 zinc finger. An N6-acetyllysine mark is found at lysine 18, lysine 54, and lysine 92. A RanBP2-type 2 zinc finger spans residues 65–94 (SANDWQCKTCSNVNWARRSECNMCNTPKYA). Residues 117–320 (REESDGEYDE…QVIGENTKQP (204 aa)) are disordered. 5 positions are modified to phosphoserine: serine 120, serine 153, serine 181, serine 188, and serine 193. A compositionally biased stretch (acidic residues) spans 150–163 (DKESEGEEEDEDED). A required for nuclear targeting region spans residues 151-320 (KESEGEEEDE…QVIGENTKQP (170 aa)). Over residues 196–210 (KKSNRRSRSKSRSSH) the composition is skewed to basic residues. 2 stretches are compositionally biased toward low complexity: residues 211–224 (SRSS…SSSR) and 232–242 (RSSSSSQSRSR). Residues 251–273 (SRGSKSRSSSRSHRGSSSPRKRS) show a composition bias toward basic residues.

This sequence belongs to the ZRANB2 family. In terms of assembly, interacts with the C-terminal half of SNRP70/U1-70K, the Arg/Ser-rich domain of AKAP17A as well as with U2AF1 and CLK1. Post-translationally, phosphorylated on Ser-310 upon DNA damage, probably by ATM or ATR.

It localises to the nucleus. Functionally, splice factor required for alternative splicing of TRA2B/SFRS10 transcripts. Binds to ssRNA containing the consensus sequence 5'-AGGUAA-3'. May interfere with constitutive 5'-splice site selection. This Pongo abelii (Sumatran orangutan) protein is Zinc finger Ran-binding domain-containing protein 2.